A 295-amino-acid polypeptide reads, in one-letter code: 33 kDa chaperonin (295 aa).

Intrachain disulfides connect C233-C235 and C267-C270.

It belongs to the HSP33 family. Post-translationally, under oxidizing conditions two disulfide bonds are formed involving the reactive cysteines. Under reducing conditions zinc is bound to the reactive cysteines and the protein is inactive.

The protein resides in the cytoplasm. Redox regulated molecular chaperone. Protects both thermally unfolding and oxidatively damaged proteins from irreversible aggregation. Plays an important role in the bacterial defense system toward oxidative stress. This chain is 33 kDa chaperonin, found in Mannheimia succiniciproducens (strain KCTC 0769BP / MBEL55E).